Here is a 622-residue protein sequence, read N- to C-terminus: Elongation factor 4 (622 aa).

The 182-residue stretch at 17–198 (ELLRNFCIIA…QIVRQIPAPV (182 aa)) folds into the tr-type G domain. GTP contacts are provided by residues 29–34 (DHGKST) and 145–148 (NKID).

The protein belongs to the TRAFAC class translation factor GTPase superfamily. Classic translation factor GTPase family. LepA subfamily.

It is found in the cell membrane. The enzyme catalyses GTP + H2O = GDP + phosphate + H(+). Its function is as follows. Required for accurate and efficient protein synthesis under certain stress conditions. May act as a fidelity factor of the translation reaction, by catalyzing a one-codon backward translocation of tRNAs on improperly translocated ribosomes. Back-translocation proceeds from a post-translocation (POST) complex to a pre-translocation (PRE) complex, thus giving elongation factor G a second chance to translocate the tRNAs correctly. Binds to ribosomes in a GTP-dependent manner. This is Elongation factor 4 from Kineococcus radiotolerans (strain ATCC BAA-149 / DSM 14245 / SRS30216).